The following is a 189-amino-acid chain: Transmembrane protein 229b (189 aa).

Topologically, residues 1-17 (MATTVTPEPLTALSRWY) are cytoplasmic. The helical transmembrane segment at 18–38 (LYAIHGYFCEVMFTAAWEFVV) threads the bilayer. Topologically, residues 39 to 43 (NCNWK) are extracellular. A helical membrane pass occupies residues 44–64 (FPGVTSVWALFIYGTCILIVE). Residues 65 to 75 (RMYLCLKDRCN) lie on the Cytoplasmic side of the membrane. Residues 76–96 (VLLRCIIYTLWTYFWEFGTGF) form a helical membrane-spanning segment. The Extracellular segment spans residues 97–114 (LLRQFNACPWDYSEFKYN). A helical transmembrane segment spans residues 115–135 (FMGLITAEYAVPWFCASFIVE). Over 136–189 (RLVIRNTLRLRFDEVAESGQAEERLDRGGGGRGGRRGRGARAGATSANGYVKVD) the chain is Cytoplasmic. The interval 158–189 (ERLDRGGGGRGGRRGRGARAGATSANGYVKVD) is disordered.

Belongs to the TMEM229 family.

It localises to the membrane. This is Transmembrane protein 229b (tmem229b) from Danio rerio (Zebrafish).